Reading from the N-terminus, the 376-residue chain is Succinyl-diaminopimelate desuccinylase (376 aa).

H67 provides a ligand contact to Zn(2+). Residue D69 is part of the active site. D100 provides a ligand contact to Zn(2+). E134 (proton acceptor) is an active-site residue. Residues E135, E163, and H349 each coordinate Zn(2+).

This sequence belongs to the peptidase M20A family. DapE subfamily. In terms of assembly, homodimer. Zn(2+) is required as a cofactor. It depends on Co(2+) as a cofactor.

It carries out the reaction N-succinyl-(2S,6S)-2,6-diaminopimelate + H2O = (2S,6S)-2,6-diaminopimelate + succinate. The protein operates within amino-acid biosynthesis; L-lysine biosynthesis via DAP pathway; LL-2,6-diaminopimelate from (S)-tetrahydrodipicolinate (succinylase route): step 3/3. Its function is as follows. Catalyzes the hydrolysis of N-succinyl-L,L-diaminopimelic acid (SDAP), forming succinate and LL-2,6-diaminopimelate (DAP), an intermediate involved in the bacterial biosynthesis of lysine and meso-diaminopimelic acid, an essential component of bacterial cell walls. In Idiomarina loihiensis (strain ATCC BAA-735 / DSM 15497 / L2-TR), this protein is Succinyl-diaminopimelate desuccinylase.